The primary structure comprises 191 residues: Glycerol-3-phosphate acyltransferase (191 aa).

5 helical membrane-spanning segments follow: residues 10–30 (LAFIIFVYVIAAIPFGRCISA), 57–77 (FGSVVFMLDFLKAAAPVFLAV), 84–104 (FASTVGFVAVFAHVFSVYMAF), 118–138 (FVLVLPVFIVAVCTWGIFFVL), and 158–178 (YALLELYVFLPILAGTVLIFI).

It belongs to the PlsY family. In terms of assembly, probably interacts with PlsX.

The protein resides in the cell inner membrane. The catalysed reaction is an acyl phosphate + sn-glycerol 3-phosphate = a 1-acyl-sn-glycero-3-phosphate + phosphate. Its pathway is lipid metabolism; phospholipid metabolism. Catalyzes the transfer of an acyl group from acyl-phosphate (acyl-PO(4)) to glycerol-3-phosphate (G3P) to form lysophosphatidic acid (LPA). This enzyme utilizes acyl-phosphate as fatty acyl donor, but not acyl-CoA or acyl-ACP. The protein is Glycerol-3-phosphate acyltransferase of Neorickettsia sennetsu (strain ATCC VR-367 / Miyayama) (Ehrlichia sennetsu).